We begin with the raw amino-acid sequence, 357 residues long: GDSL esterase/lipase At5g45950 (357 aa).

An N-terminal signal peptide occupies residues 1-23 (MLLVAFVTLLVAVALQPLPSVLS). N-linked (GlcNAc...) asparagine glycosylation occurs at asparagine 37. Residue serine 47 is the Nucleophile of the active site. Asparagine 132 is a glycosylation site (N-linked (GlcNAc...) asparagine). Residues aspartate 331 and histidine 334 contribute to the active site.

The protein belongs to the 'GDSL' lipolytic enzyme family.

Its subcellular location is the secreted. This Arabidopsis thaliana (Mouse-ear cress) protein is GDSL esterase/lipase At5g45950.